A 379-amino-acid chain; its full sequence is Queuine tRNA-ribosyltransferase (379 aa).

Residue aspartate 94 is the Proton acceptor of the active site. Substrate-binding positions include 94–98 (DSGGF), aspartate 148, glutamine 191, and glycine 218. Residues 249–255 (GVGSPDS) form an RNA binding region. The active-site Nucleophile is aspartate 268. An RNA binding; important for wobble base 34 recognition region spans residues 273-277 (TRIAR). Cysteine 306, cysteine 308, cysteine 311, and histidine 337 together coordinate Zn(2+).

This sequence belongs to the queuine tRNA-ribosyltransferase family. Homodimer. Within each dimer, one monomer is responsible for RNA recognition and catalysis, while the other monomer binds to the replacement base PreQ1. Requires Zn(2+) as cofactor.

The catalysed reaction is 7-aminomethyl-7-carbaguanine + guanosine(34) in tRNA = 7-aminomethyl-7-carbaguanosine(34) in tRNA + guanine. It functions in the pathway tRNA modification; tRNA-queuosine biosynthesis. Functionally, catalyzes the base-exchange of a guanine (G) residue with the queuine precursor 7-aminomethyl-7-deazaguanine (PreQ1) at position 34 (anticodon wobble position) in tRNAs with GU(N) anticodons (tRNA-Asp, -Asn, -His and -Tyr). Catalysis occurs through a double-displacement mechanism. The nucleophile active site attacks the C1' of nucleotide 34 to detach the guanine base from the RNA, forming a covalent enzyme-RNA intermediate. The proton acceptor active site deprotonates the incoming PreQ1, allowing a nucleophilic attack on the C1' of the ribose to form the product. After dissociation, two additional enzymatic reactions on the tRNA convert PreQ1 to queuine (Q), resulting in the hypermodified nucleoside queuosine (7-(((4,5-cis-dihydroxy-2-cyclopenten-1-yl)amino)methyl)-7-deazaguanosine). This Listeria innocua serovar 6a (strain ATCC BAA-680 / CLIP 11262) protein is Queuine tRNA-ribosyltransferase.